A 355-amino-acid chain; its full sequence is DNA-directed RNA polymerase subunit alpha (355 aa).

The interval 1-233 (MVREKVRVST…DLFIPFLHKE (233 aa)) is alpha N-terminal domain (alpha-NTD). Positions 268 to 355 (KKKIALKSIF…EIYCYSIFFH (88 aa)) are alpha C-terminal domain (alpha-CTD).

It belongs to the RNA polymerase alpha chain family. As to quaternary structure, in plastids the minimal PEP RNA polymerase catalytic core is composed of four subunits: alpha, beta, beta', and beta''. When a (nuclear-encoded) sigma factor is associated with the core the holoenzyme is formed, which can initiate transcription.

It is found in the plastid. The protein resides in the chloroplast. It carries out the reaction RNA(n) + a ribonucleoside 5'-triphosphate = RNA(n+1) + diphosphate. Functionally, DNA-dependent RNA polymerase catalyzes the transcription of DNA into RNA using the four ribonucleoside triphosphates as substrates. The polypeptide is DNA-directed RNA polymerase subunit alpha (Jasminum nudiflorum (Winter jasmine)).